We begin with the raw amino-acid sequence, 371 residues long: uncharacterized protein (371 aa).

ATP is bound at residue 33 to 40; sequence GPLNSGKT.

It belongs to the archaeal ATPase family.

This is an uncharacterized protein from Methanocaldococcus jannaschii (strain ATCC 43067 / DSM 2661 / JAL-1 / JCM 10045 / NBRC 100440) (Methanococcus jannaschii).